The sequence spans 563 residues: Rhodopsin kinase GRK1 (563 aa).

The segment at 1-15 (MDFGSLETVVANSAF) is interaction with RCVRN. The interval 1–189 (MDFGSLETVV…LEAQPMGEDW (189 aa)) is N-terminal. Position 5 is a phosphoserine (Ser-5). Thr-8 carries the post-translational modification Phosphothreonine. Phosphoserine; by PKA and autocatalysis is present on Ser-21. The region spanning 58–175 (FESVCLEQPI…LGSLYFLRFL (118 aa)) is the RGS domain. The Protein kinase domain occupies 190–455 (FLDFRVLGKG…CDKLRAHPLF (266 aa)). Residues 196 to 204 (LGKGGFGEV) and Lys-219 contribute to the ATP site. Asp-317 functions as the Proton acceptor in the catalytic mechanism. One can recognise an AGC-kinase C-terminal domain in the interval 456 to 521 (KDLNWRQLEA…GNCPIPWQEE (66 aa)). The tract at residues 456–563 (KDLNWRQLEA…SSKSGMCLVS (108 aa)) is C-terminal. The residue at position 491 (Ser-491) is a Phosphoserine; by autocatalysis. At Thr-492 the chain carries Phosphothreonine; by autocatalysis. Positions 539-563 (QMPDDMKGISGGSSSSSKSGMCLVS) are disordered. A compositionally biased stretch (low complexity) spans 550-563 (GSSSSSKSGMCLVS). Cys-560 carries the post-translational modification Cysteine methyl ester. The S-farnesyl cysteine moiety is linked to residue Cys-560. Positions 561-563 (LVS) are cleaved as a propeptide — removed in mature form.

Belongs to the protein kinase superfamily. AGC Ser/Thr protein kinase family. GPRK subfamily. In terms of assembly, interacts (via N-terminus) with RCVRN (via C-terminus); the interaction is Ca(2+)-dependent. Interacts (when prenylated) with PDE6D; this promotes release from membranes. May form a complex composed of RHO, GRK1 and RCVRN in a Ca(2+)-dependent manner; RCVRN prevents the interaction between GRK1 and RHO. Autophosphorylated, Ser-21 is a minor site of autophosphorylation compared to Ser-491 and Thr-492. Phosphorylation at Ser-21 is regulated by light and activated by cAMP. In terms of processing, farnesylation is required for full activity. In terms of tissue distribution, retinal-specific. Expressed in rods and cones cells.

The protein resides in the membrane. Its subcellular location is the cell projection. The protein localises to the cilium. It is found in the photoreceptor outer segment. The catalysed reaction is L-threonyl-[rhodopsin] + ATP = O-phospho-L-threonyl-[rhodopsin] + ADP + H(+). The enzyme catalyses L-seryl-[rhodopsin] + ATP = O-phospho-L-seryl-[rhodopsin] + ADP + H(+). Its activity is regulated as follows. Inhibited by RCVRN, which prevents the interaction between GRK1 and RHO. Inhibition is calcium-dependent. Inhibited by phosphorylation of Ser-21. In terms of biological role, retina-specific kinase involved in the signal turnoff via phosphorylation of rhodopsin (RHO), the G protein- coupled receptor that initiates the phototransduction cascade. This rapid desensitization is essential for scotopic vision and permits rapid adaptation to changes in illumination. May play a role in the maintenance of the outer nuclear layer in the retina. The protein is Rhodopsin kinase GRK1 of Homo sapiens (Human).